The primary structure comprises 193 residues: Rho-related GTP-binding protein RhoA-D (193 aa).

GTP is bound by residues 12–19, 30–37, 59–63, 117–120, and 160–162; these read GDGACGKT, FPEVYVPT, DTAGQ, NKKD, and SAK. The (Microbial infection) O-linked (GlcNAc) tyrosine; by Yersinia Afp18 glycan is linked to Tyr-34. Position 190 is a cysteine methyl ester (Cys-190). Cys-190 is lipidated: S-geranylgeranyl cysteine. The propeptide at 191–193 is removed in mature form; the sequence is LLL.

This sequence belongs to the small GTPase superfamily. Rho family. (Microbial infection) Glycosylated at Tyr-34 by Yersinia ruckeri toxin Afp18. Mono-O-GlcNAcylation by Afp18 inhibits RhoA activation by guanine nucleotide exchange factors and blocks RhoA signaling.

It is found in the cell membrane. Functionally, regulates a signal transduction pathway linking plasma membrane receptors to the assembly of focal adhesions and actin stress fibers. The polypeptide is Rho-related GTP-binding protein RhoA-D (Danio rerio (Zebrafish)).